Reading from the N-terminus, the 252-residue chain is tRNA-cytidine(32) 2-sulfurtransferase (252 aa).

The PP-loop motif signature appears at 37-42; sequence SGGKDS. C112, C115, and C202 together coordinate [4Fe-4S] cluster.

It belongs to the TtcA family. Homodimer. It depends on Mg(2+) as a cofactor. [4Fe-4S] cluster serves as cofactor.

Its subcellular location is the cytoplasm. The enzyme catalyses cytidine(32) in tRNA + S-sulfanyl-L-cysteinyl-[cysteine desulfurase] + AH2 + ATP = 2-thiocytidine(32) in tRNA + L-cysteinyl-[cysteine desulfurase] + A + AMP + diphosphate + H(+). It functions in the pathway tRNA modification. Its function is as follows. Catalyzes the ATP-dependent 2-thiolation of cytidine in position 32 of tRNA, to form 2-thiocytidine (s(2)C32). The sulfur atoms are provided by the cysteine/cysteine desulfurase (IscS) system. The chain is tRNA-cytidine(32) 2-sulfurtransferase from Geotalea uraniireducens (strain Rf4) (Geobacter uraniireducens).